Consider the following 56-residue polypeptide: Small ribosomal subunit protein eS31 (56 aa).

Residues Cys-28, Cys-31, Cys-46, and Cys-49 each coordinate Zn(2+). The C4-type zinc-finger motif lies at 28-49; sequence CPRCGPGVFMANHKDRWSCGRC.

Belongs to the eukaryotic ribosomal protein eS31 family. Part of the 30S ribosomal subunit. Zn(2+) is required as a cofactor.

In Thermococcus gammatolerans (strain DSM 15229 / JCM 11827 / EJ3), this protein is Small ribosomal subunit protein eS31.